Here is a 207-residue protein sequence, read N- to C-terminus: Granulocyte colony-stimulating factor (207 aa).

A signal peptide spans 1-30; that stretch reads MAGPATQSPMKLMALQLLLWHSALWTVQEA. 2 cysteine pairs are disulfide-bonded: C69–C75 and C97–C107. T166 carries an O-linked (GalNAc...) threonine glycan.

This sequence belongs to the IL-6 superfamily. As to quaternary structure, monomer. Post-translationally, O-glycan consists of Gal-GalNAc disaccharide which can be modified with up to two sialic acid residues (done in recombinantly expressed G-CSF from CHO cells).

Its subcellular location is the secreted. Granulocyte/macrophage colony-stimulating factors are cytokines that act in hematopoiesis by controlling the production, differentiation, and function of 2 related white cell populations of the blood, the granulocytes and the monocytes-macrophages. This CSF induces granulocytes. This is Granulocyte colony-stimulating factor (CSF3) from Homo sapiens (Human).